We begin with the raw amino-acid sequence, 62 residues long: Large ribosomal subunit protein eL24 (62 aa).

Residues Cys6, Cys9, Cys32, and Cys36 each coordinate Zn(2+). The C4-type zinc-finger motif lies at 6–36 (CSFCEGKIEPGCGKKYVKKDGSVMQFCSSKC).

The protein belongs to the eukaryotic ribosomal protein eL24 family. In terms of assembly, part of the 50S ribosomal subunit. Forms a cluster with proteins L3 and L14. The cofactor is Zn(2+).

Binds to the 23S rRNA. The sequence is that of Large ribosomal subunit protein eL24 from Methanococcus vannielii (strain ATCC 35089 / DSM 1224 / JCM 13029 / OCM 148 / SB).